Here is a 193-residue protein sequence, read N- to C-terminus: MADKKPTAENWPVVSGDYIVGDPESPVAVTTLASHNEDIPAAAGAAIAGPCKTENLGIEKVVANIISNPNIRFLILCGAEVQGHITGQSFKALYENGCDPEKKKITGATGAIPFVENIPMEGVERFQQQLELVDMIDNEDGGAITAKVKECIEKDPGAFEEDSLVIKIDEERYSKKSSFVESSSESEKIESEA.

The Cytoplasmic segment spans residues 1–38 (MADKKPTAENWPVVSGDYIVGDPESPVAVTTLASHNED). The chain crosses the membrane as a helical span at residues 39–58 (IPAAAGAAIAGPCKTENLGI). At 59–193 (EKVVANIISN…SESEKIESEA (135 aa)) the chain is on the extracellular side. H84 is a 5-hydroxybenzimidazolylcob(I)amide binding site. The segment at 174 to 193 (SKKSSFVESSSESEKIESEA) is disordered.

This sequence belongs to the MtrA family. The complex is composed of 8 subunits; MtrA, MtrB, MtrC, MtrD, MtrE, MtrF, MtrG and MtrH. 5-hydroxybenzimidazolylcob(I)amide is required as a cofactor.

It localises to the cell membrane. It carries out the reaction 5-methyl-5,6,7,8-tetrahydromethanopterin + coenzyme M + 2 Na(+)(in) = 5,6,7,8-tetrahydromethanopterin + methyl-coenzyme M + 2 Na(+)(out). It functions in the pathway one-carbon metabolism; methanogenesis from CO(2); methyl-coenzyme M from 5,10-methylene-5,6,7,8-tetrahydromethanopterin: step 2/2. In terms of biological role, part of a complex that catalyzes the formation of methyl-coenzyme M and tetrahydromethanopterin from coenzyme M and methyl-tetrahydromethanopterin. This is an energy-conserving, sodium-ion translocating step. In Methanobrevibacter ruminantium (strain ATCC 35063 / DSM 1093 / JCM 13430 / OCM 146 / M1) (Methanobacterium ruminantium), this protein is Tetrahydromethanopterin S-methyltransferase subunit A 2.